We begin with the raw amino-acid sequence, 248 residues long: Proteasome subunit alpha (248 aa).

A disordered region spans residues 229–248 (LLEADGATTEAESSAEEEDE).

Belongs to the peptidase T1A family. As to quaternary structure, the 20S proteasome core is composed of 14 alpha and 14 beta subunits that assemble into four stacked heptameric rings, resulting in a barrel-shaped structure. The two inner rings, each composed of seven catalytic beta subunits, are sandwiched by two outer rings, each composed of seven alpha subunits. The catalytic chamber with the active sites is on the inside of the barrel. Has a gated structure, the ends of the cylinder being occluded by the N-termini of the alpha-subunits. Is capped by the proteasome-associated ATPase, ARC.

It is found in the cytoplasm. It functions in the pathway protein degradation; proteasomal Pup-dependent pathway. The formation of the proteasomal ATPase ARC-20S proteasome complex, likely via the docking of the C-termini of ARC into the intersubunit pockets in the alpha-rings, may trigger opening of the gate for substrate entry. Interconversion between the open-gate and close-gate conformations leads to a dynamic regulation of the 20S proteasome proteolysis activity. In terms of biological role, component of the proteasome core, a large protease complex with broad specificity involved in protein degradation. The chain is Proteasome subunit alpha from Streptomyces scabiei (strain 87.22).